Reading from the N-terminus, the 20-residue chain is KQRSGESQNIIVGSWGAKVS.

The segment covering 1–11 (KQRSGESQNII) has biased composition (polar residues). A disordered region spans residues 1 to 20 (KQRSGESQNIIVGSWGAKVS).

It belongs to the jacalin lectin family. In terms of assembly, tetramer of four alpha chains associated with two or four beta chains.

In terms of biological role, D-galactose-specific lectin, binds the T-antigen structure Gal-beta1,3-GalNAc (Thomsen-Friedenreich-antigen-specific lectin). Potent and selective stimulant of distinct T- and B-cell functions. Shows a unique ability to specifically recognize IgA-1 from human serum. The chain is Agglutinin beta-1 chain from Artocarpus tonkinensis.